Consider the following 486-residue polypeptide: Glutamyl-tRNA(Gln) amidotransferase subunit A (486 aa).

Catalysis depends on charge relay system residues K74 and S149. The active-site Acyl-ester intermediate is S173.

Belongs to the amidase family. GatA subfamily. As to quaternary structure, heterotrimer of A, B and C subunits.

The catalysed reaction is L-glutamyl-tRNA(Gln) + L-glutamine + ATP + H2O = L-glutaminyl-tRNA(Gln) + L-glutamate + ADP + phosphate + H(+). Its function is as follows. Allows the formation of correctly charged Gln-tRNA(Gln) through the transamidation of misacylated Glu-tRNA(Gln) in organisms which lack glutaminyl-tRNA synthetase. The reaction takes place in the presence of glutamine and ATP through an activated gamma-phospho-Glu-tRNA(Gln). In Prochlorococcus marinus (strain MIT 9303), this protein is Glutamyl-tRNA(Gln) amidotransferase subunit A.